A 338-amino-acid polypeptide reads, in one-letter code: RNA 3'-terminal phosphate cyclase (338 aa).

ATP-binding positions include glutamine 103 and 283 to 287 (YLADQ). Catalysis depends on histidine 308, which acts as the Tele-AMP-histidine intermediate.

It belongs to the RNA 3'-terminal cyclase family. Type 1 subfamily.

It is found in the cytoplasm. It carries out the reaction a 3'-end 3'-phospho-ribonucleotide-RNA + ATP = a 3'-end 2',3'-cyclophospho-ribonucleotide-RNA + AMP + diphosphate. Catalyzes the conversion of 3'-phosphate to a 2',3'-cyclic phosphodiester at the end of RNA. The mechanism of action of the enzyme occurs in 3 steps: (A) adenylation of the enzyme by ATP; (B) transfer of adenylate to an RNA-N3'P to produce RNA-N3'PP5'A; (C) and attack of the adjacent 2'-hydroxyl on the 3'-phosphorus in the diester linkage to produce the cyclic end product. The biological role of this enzyme is unknown but it is likely to function in some aspects of cellular RNA processing. In Escherichia coli O6:K15:H31 (strain 536 / UPEC), this protein is RNA 3'-terminal phosphate cyclase.